The primary structure comprises 324 residues: Chorismate mutase 1, chloroplastic (324 aa).

The N-terminal 56 residues, 1–56 (METQLLRFPSHTITSSITTNSSRNTTPFLPHKKWSHFVKFQLVNSSSSIKHGIRPL), are a transit peptide targeting the chloroplast. An L-phenylalanine-binding site is contributed by arginine 70. Positions 70–324 (RVDETESYTL…QVQYLLRRLD (255 aa)) constitute a Chorismate mutase domain. Residues arginine 141 and 202–205 (NYGS) contribute to the L-tyrosine site. L-phenylalanine is bound at residue 202-205 (NYGS).

In terms of assembly, homodimer. As to expression, mostly expressed in petal tubes and petal limbs, and, to a lower extent, in stigmas, anthers, sepals, roots, stems and leaves.

The protein localises to the plastid. Its subcellular location is the chloroplast stroma. The catalysed reaction is chorismate = prephenate. It functions in the pathway metabolic intermediate biosynthesis; prephenate biosynthesis; prephenate from chorismate: step 1/1. Its activity is regulated as follows. Allosterically activated by tryptophan but not by tyrosine and phenylalanine. Component of the floral volatile benzenoid/phenylpropanoid (FVBPs) biosynthetic pathway. Mediates the conversion of chorismate to prephenate, thus coupling metabolites from the shikimate pathway to the synthesis of FVBPs in the corolla. The polypeptide is Chorismate mutase 1, chloroplastic (Petunia hybrida (Petunia)).